The primary structure comprises 72 residues: DNA-directed RNA polymerase subunit omega (72 aa).

Belongs to the RNA polymerase subunit omega family. As to quaternary structure, the RNAP catalytic core consists of 2 alpha, 1 beta, 1 beta' and 1 omega subunit. When a sigma factor is associated with the core the holoenzyme is formed, which can initiate transcription.

The enzyme catalyses RNA(n) + a ribonucleoside 5'-triphosphate = RNA(n+1) + diphosphate. Functionally, promotes RNA polymerase assembly. Latches the N- and C-terminal regions of the beta' subunit thereby facilitating its interaction with the beta and alpha subunits. This Petrotoga mobilis (strain DSM 10674 / SJ95) protein is DNA-directed RNA polymerase subunit omega.